Here is a 119-residue protein sequence, read N- to C-terminus: MVKLSFPRELRLLTPNHFNFVFQQPQRAGTPQLTILGRMNSLGYPRIGLTVAKKHVKRAHERNRIKRLTRESFRLRQHSLPAMDFVVIVKKGVQELDNRALTEMLEKLWRRHCRQARAS.

Belongs to the RnpA family. Consists of a catalytic RNA component (M1 or rnpB) and a protein subunit.

The catalysed reaction is Endonucleolytic cleavage of RNA, removing 5'-extranucleotides from tRNA precursor.. RNaseP catalyzes the removal of the 5'-leader sequence from pre-tRNA to produce the mature 5'-terminus. It can also cleave other RNA substrates such as 4.5S RNA. The protein component plays an auxiliary but essential role in vivo by binding to the 5'-leader sequence and broadening the substrate specificity of the ribozyme. The sequence is that of Ribonuclease P protein component from Edwardsiella ictaluri (strain 93-146).